A 167-amino-acid polypeptide reads, in one-letter code: Putative ripening-related protein 6 (167 aa).

The N-terminal stretch at 1–23 (MANAKQLALFAMLVLLLASCAAA) is a signal peptide. A disordered region spans residues 28-57 (KPDPCDGGGGGVDSHLPPGMRRCSSPAVSE).

Belongs to the kiwellin family.

The protein resides in the secreted. The sequence is that of Putative ripening-related protein 6 from Oryza sativa subsp. japonica (Rice).